A 67-amino-acid polypeptide reads, in one-letter code: Large ribosomal subunit protein uL29 (67 aa).

This sequence belongs to the universal ribosomal protein uL29 family.

This Methanosarcina barkeri (strain Fusaro / DSM 804) protein is Large ribosomal subunit protein uL29.